The following is a 213-amino-acid chain: FMN-dependent NADH:quinone oxidoreductase 1 (213 aa).

An FMN-binding site is contributed by Ser-18 to Ser-20.

The protein belongs to the azoreductase type 1 family. In terms of assembly, homodimer. FMN is required as a cofactor.

It catalyses the reaction 2 a quinone + NADH + H(+) = 2 a 1,4-benzosemiquinone + NAD(+). The catalysed reaction is N,N-dimethyl-1,4-phenylenediamine + anthranilate + 2 NAD(+) = 2-(4-dimethylaminophenyl)diazenylbenzoate + 2 NADH + 2 H(+). Functionally, quinone reductase that provides resistance to thiol-specific stress caused by electrophilic quinones. Also exhibits azoreductase activity. Catalyzes the reductive cleavage of the azo bond in aromatic azo compounds to the corresponding amines. The polypeptide is FMN-dependent NADH:quinone oxidoreductase 1 (Bacillus cereus (strain ATCC 10987 / NRS 248)).